A 521-amino-acid chain; its full sequence is Bacillolysin (521 aa).

A signal peptide spans 1–27 (MGLGKKLSVAVAASFMSLTISLPGVQA). Positions 28-221 (AENPQLKENL…ILKKQNKVEH (194 aa)) are cleaved as a propeptide — activation peptide. Residues Gln283 and Asp360 each coordinate Ca(2+). His364 contributes to the Zn(2+) binding site. The active site involves Glu365. 2 residues coordinate Zn(2+): His368 and Glu388. 5 residues coordinate Ca(2+): Asp399, Asp402, Asp404, Glu407, and Val411. His449 functions as the Proton donor in the catalytic mechanism.

It belongs to the peptidase M4 family. Requires Ca(2+) as cofactor. It depends on Zn(2+) as a cofactor.

Its subcellular location is the secreted. The catalysed reaction is Similar, but not identical, to that of thermolysin.. Its function is as follows. Extracellular zinc metalloprotease. This is Bacillolysin (npr) from Bacillus amyloliquefaciens (Bacillus velezensis).